The following is a 1415-amino-acid chain: MNQELSTNPFNPVAPVKTFDEIKISLASPERILSWSYGEIKKPETINYRTFKPERDGLFCARIFGPIKDYECLCGKYKRMKYRGVVCEKCGVEVTLQKVRRERMGHIELAAPVAHIWFLKSLPSRIGLMLDMTLRDLERILYFENYVVIEPGLTDLTYGQLMTEEEFLDAQDQYGADAFTANIGAEAIREMLSAIDLEQTAETLREELKEATGELKPKKIIKRLKIVESFLESGNRPEWMILTVLPVIPPELRPLVPLDGGRFATSDLNDLYRRVINRNNRLKRLIELRAPDIIVRNEKRMLQEAVDALFDNGRRGRVITGTNKRPLKSLSDMLKGKQGRFRQNLLGKRVDFSGRSVIVTGPELKLHQCGLPKKMALELFKPFIYSRLEAKGLSSTVKQAKKLVEKERPEVWDILDEVIREHPVLLNRAPTLHRLGIQAFEPILIEGKAIQLHPLVCSAFNADFDGDQMAVHVPLSLEAQLEARVLMMSTNNVLSPANGAPIIVPSQDMVLGLYYTTMERRGMKGEGMAFSSVEEVEHALAAGEVHLHATITARIKQIDEEGNEVVKRYQTTPGRLRLGNLLPLNAKAPFELVNRLLRKKDVQNVIDTVYRYCGQKESVIFCDQIMGMGFREAFKAGISFGKDDMLIPDTKWPIVNEVRDQVKEFEQQYMDGLITQGEKYNKVVDAWSKCSDKVAGEMMAEISAVRYDDAGAEKEPNSVYMMSHSGARGSPAQMKQLGGMRGLMAKPNGEIIETPIISNFKEGLTVLEYFNSTHGARKGLADTALKTANSGYLTRRLVDVAQDCIVRTHDCGTENAITASAAVNEGEVVSPLAERVLGRVAAEDILVPGSDEVIVARGELIDERRADLVDQANVASVRIRSPLTCEAEEGVCAMCYGRDLARGTLVNIGEAVGIIAAQSIGEPGTQLTMRTFHIGGIAQGGQQSFLEASQEGRIEFRNPNLLENANGEQIVMGRNMQLAIIDEAGQERATHKLTYGAKVHVKDGQTVKRATRLFEWDPYTLPIIAEKAGVARFVDLVSGISVREDTDEATGMTQKIVSDWRSTPKGGDLKPEIIIMNPETGDPMRNEAGNPISYPMSVEAILSVEDGQTVRAGDVVARIPREGARTKDITGGLPRVAELFEARRPKDHAIIAENDGYVRFGKDYKNKRRITIEPVDDTLNSVEYMVPKGKHIPVQEGDFVQKGDYIMDGNPAPHDILRILGVEALANYMIDEVQEVYRLQGVKINDKHIEVIVRQMLQKYEILDSGETTLLKGEHVDKAELDEVNQKAMDHGMRPAHAEPILLGITKASLQTRSFISAASFQETTRVLTEASVQGKRDKLVGLKENVIVGRLIPAGTGGATSRVKKIAHDRDQKVIDTRRAEAESAAALAAPTDEVIDLGSEDSGLVETVENREE.

Residues C72, C74, C87, and C90 each contribute to the Zn(2+) site. Residues D463, D465, and D467 each contribute to the Mg(2+) site. Positions 811, 885, 892, and 895 each coordinate Zn(2+).

Belongs to the RNA polymerase beta' chain family. As to quaternary structure, the RNAP catalytic core consists of 2 alpha, 1 beta, 1 beta' and 1 omega subunit. When a sigma factor is associated with the core the holoenzyme is formed, which can initiate transcription. Mg(2+) is required as a cofactor. Zn(2+) serves as cofactor.

The catalysed reaction is RNA(n) + a ribonucleoside 5'-triphosphate = RNA(n+1) + diphosphate. Functionally, DNA-dependent RNA polymerase catalyzes the transcription of DNA into RNA using the four ribonucleoside triphosphates as substrates. The polypeptide is DNA-directed RNA polymerase subunit beta' (Cereibacter sphaeroides (strain ATCC 17029 / ATH 2.4.9) (Rhodobacter sphaeroides)).